Consider the following 392-residue polypeptide: GTPase Obg (392 aa).

In terms of domain architecture, Obg spans 1–159; that stretch reads MKFVDEATIL…RDLQLELMLL (159 aa). A disordered region spans residues 127–148; that stretch reads NTRFKSSVNRTPRQKTMGTPGD. The span at 129–143 shows a compositional bias: polar residues; that stretch reads RFKSSVNRTPRQKTM. An OBG-type G domain is found at 160–333; sequence ADVGMLGMPN…LCWDVMTFII (174 aa). Residues 166–173, 191–195, 213–216, 283–286, and 314–316 contribute to the GTP site; these read GMPNAGKS, FTTLV, DIPG, NKID, and SAA. Mg(2+)-binding residues include Ser173 and Thr193. Positions 362 to 386 are enriched in acidic residues; the sequence is EEAEAEAEDDEDWDDDWDEDDEEGV. The disordered stretch occupies residues 362 to 392; the sequence is EEAEAEAEDDEDWDDDWDEDDEEGVEFIYKR.

It belongs to the TRAFAC class OBG-HflX-like GTPase superfamily. OBG GTPase family. Monomer. Requires Mg(2+) as cofactor.

The protein localises to the cytoplasm. Its function is as follows. An essential GTPase which binds GTP, GDP and possibly (p)ppGpp with moderate affinity, with high nucleotide exchange rates and a fairly low GTP hydrolysis rate. Plays a role in control of the cell cycle, stress response, ribosome biogenesis and in those bacteria that undergo differentiation, in morphogenesis control. This is GTPase Obg from Klebsiella pneumoniae subsp. pneumoniae (strain ATCC 700721 / MGH 78578).